We begin with the raw amino-acid sequence, 208 residues long: Probable GTP-binding protein EngB (208 aa).

The 175-residue stretch at 29-203 (EGREVAFAGR…WDKLGEWLGI (175 aa)) folds into the EngB-type G domain. GTP-binding positions include 37–44 (GRSNAGKS), 64–68 (GRTQL), 82–85 (DLPG), 149–152 (TKAD), and 182–184 (FSA). 2 residues coordinate Mg(2+): Ser44 and Thr66.

Belongs to the TRAFAC class TrmE-Era-EngA-EngB-Septin-like GTPase superfamily. EngB GTPase family. Requires Mg(2+) as cofactor.

Its function is as follows. Necessary for normal cell division and for the maintenance of normal septation. The sequence is that of Probable GTP-binding protein EngB from Alcanivorax borkumensis (strain ATCC 700651 / DSM 11573 / NCIMB 13689 / SK2).